Consider the following 121-residue polypeptide: Large ribosomal subunit protein uL14c (121 aa).

The protein belongs to the universal ribosomal protein uL14 family. Part of the 50S ribosomal subunit.

It is found in the plastid. Its subcellular location is the chloroplast. Binds to 23S rRNA. This is Large ribosomal subunit protein uL14c from Tetradesmus obliquus (Green alga).